The following is a 434-amino-acid chain: Aspartate--tRNA(Asp/Asn) ligase (434 aa).

An L-aspartate-binding site is contributed by Glu167. An aspartate region spans residues 189 to 192 (QLFK). Position 211 (Arg211) interacts with L-aspartate. Residues 211-213 (RAE), 219-221 (RHL), and Glu357 each bind ATP. Residues Glu357 and Ser360 each coordinate Mg(2+). L-aspartate contacts are provided by Ser360 and Arg364. 405–408 (GGER) is a binding site for ATP.

The protein belongs to the class-II aminoacyl-tRNA synthetase family. Type 2 subfamily. Homodimer. It depends on Mg(2+) as a cofactor.

It localises to the cytoplasm. It carries out the reaction tRNA(Asx) + L-aspartate + ATP = L-aspartyl-tRNA(Asx) + AMP + diphosphate. Its function is as follows. Aspartyl-tRNA synthetase with relaxed tRNA specificity since it is able to aspartylate not only its cognate tRNA(Asp) but also tRNA(Asn). Reaction proceeds in two steps: L-aspartate is first activated by ATP to form Asp-AMP and then transferred to the acceptor end of tRNA(Asp/Asn). This Haloquadratum walsbyi (strain DSM 16790 / HBSQ001) protein is Aspartate--tRNA(Asp/Asn) ligase.